Consider the following 277-residue polypeptide: Large ribosomal subunit protein uL2c (277 aa).

The segment at 30 to 60 (RKKLTSGQHSGKGRNNRGIITSRHRGGGHKR) is disordered. The span at 51–60 (SRHRGGGHKR) shows a compositional bias: basic residues.

Belongs to the universal ribosomal protein uL2 family. As to quaternary structure, part of the 50S ribosomal subunit.

The protein localises to the plastid. It is found in the chloroplast. The polypeptide is Large ribosomal subunit protein uL2c (rpl2) (Angiopteris evecta (Mule's foot fern)).